A 138-amino-acid chain; its full sequence is Lutropin subunit beta (138 aa).

Positions Arg-1–Gly-19 are cleaved as a signal peptide. Disulfide bonds link Cys-27-Cys-75, Cys-41-Cys-90, Cys-44-Cys-128, Cys-52-Cys-106, Cys-56-Cys-108, and Cys-111-Cys-118. N-linked (GlcNAc...) asparagine glycosylation occurs at Asn-31.

Belongs to the glycoprotein hormones subunit beta family. In terms of assembly, heterodimer of a common alpha chain and a unique beta chain which confers biological specificity to thyrotropin, lutropin, follitropin and gonadotropin.

It is found in the secreted. In terms of biological role, promotes spermatogenesis and ovulation by stimulating the testes and ovaries to synthesize steroids. This chain is Lutropin subunit beta (LHB), found in Osphranter rufus (Red kangaroo).